The primary structure comprises 83 residues: Small ribosomal subunit protein bS16 (83 aa).

The protein belongs to the bacterial ribosomal protein bS16 family.

This Pseudomonas aeruginosa (strain UCBPP-PA14) protein is Small ribosomal subunit protein bS16.